Reading from the N-terminus, the 198-residue chain is Large ribosomal subunit protein bL25 (198 aa).

It belongs to the bacterial ribosomal protein bL25 family. CTC subfamily. In terms of assembly, part of the 50S ribosomal subunit; part of the 5S rRNA/L5/L18/L25 subcomplex. Contacts the 5S rRNA. Binds to the 5S rRNA independently of L5 and L18.

This is one of the proteins that binds to the 5S RNA in the ribosome where it forms part of the central protuberance. In Chlorobium phaeobacteroides (strain DSM 266 / SMG 266 / 2430), this protein is Large ribosomal subunit protein bL25.